The chain runs to 256 residues: MRLNNKVALITGAARGIGLGFAQAFAAEGAKVIIADIDIARATTSAAAIGPAAKAVKLDVTDLAQIDAVVKAVDEEFGGIDILVNNAAIFDMAPINGITEESYERVFDINLKGPMFMMKAVSNVMIARARGGKIINMASQAGRRGEALVTLYCASKAAIISATQSAALALVKHGINVNAIAPGVVDGEHWEVVDAHFAKWEGLKPGEKKAAVAKSVPIGRFATPDDIKGLAVFLASADSDYILAQTYNVDGGNWMS.

Residues 15–17, Asp36, 59–60, Asn86, Tyr152, and Lys156 contribute to the NAD(+) site; these read RGI and DV. Tyr152 acts as the Proton acceptor in catalysis.

This sequence belongs to the short-chain dehydrogenases/reductases (SDR) family.

It carries out the reaction galactitol + NAD(+) = keto-D-tagatose + NADH + H(+). It catalyses the reaction keto-D-fructose + NADH + H(+) = D-sorbitol + NAD(+). It functions in the pathway carbohydrate metabolism. Functionally, involved in galactitol catabolism. Catalyzes the oxidation of galactitol to D-tagatose. Can also catalyze the oxidation of D-sorbitol to D-fructose. The sequence is that of Galactitol 2-dehydrogenase from Agrobacterium fabrum (strain C58 / ATCC 33970) (Agrobacterium tumefaciens (strain C58)).